Reading from the N-terminus, the 374-residue chain is 4-hydroxy-3-methylbut-2-en-1-yl diphosphate synthase (flavodoxin) (374 aa).

Residues C272, C275, C307, and E314 each coordinate [4Fe-4S] cluster.

This sequence belongs to the IspG family. The cofactor is [4Fe-4S] cluster.

The catalysed reaction is (2E)-4-hydroxy-3-methylbut-2-enyl diphosphate + oxidized [flavodoxin] + H2O + 2 H(+) = 2-C-methyl-D-erythritol 2,4-cyclic diphosphate + reduced [flavodoxin]. The protein operates within isoprenoid biosynthesis; isopentenyl diphosphate biosynthesis via DXP pathway; isopentenyl diphosphate from 1-deoxy-D-xylulose 5-phosphate: step 5/6. Its function is as follows. Converts 2C-methyl-D-erythritol 2,4-cyclodiphosphate (ME-2,4cPP) into 1-hydroxy-2-methyl-2-(E)-butenyl 4-diphosphate. The protein is 4-hydroxy-3-methylbut-2-en-1-yl diphosphate synthase (flavodoxin) of Acidiphilium cryptum (strain JF-5).